We begin with the raw amino-acid sequence, 282 residues long: NADPH-dependent 7-cyano-7-deazaguanine reductase (282 aa).

A substrate-binding site is contributed by 88–90 (IES). 90-91 (SK) lines the NADPH pocket. Catalysis depends on cysteine 190, which acts as the Thioimide intermediate. Residue aspartate 197 is the Proton donor of the active site. 229–230 (HE) contributes to the substrate binding site. 258–259 (RG) serves as a coordination point for NADPH.

Belongs to the GTP cyclohydrolase I family. QueF type 2 subfamily. In terms of assembly, homodimer.

The protein localises to the cytoplasm. The enzyme catalyses 7-aminomethyl-7-carbaguanine + 2 NADP(+) = 7-cyano-7-deazaguanine + 2 NADPH + 3 H(+). It participates in tRNA modification; tRNA-queuosine biosynthesis. Catalyzes the NADPH-dependent reduction of 7-cyano-7-deazaguanine (preQ0) to 7-aminomethyl-7-deazaguanine (preQ1). This Salmonella paratyphi C (strain RKS4594) protein is NADPH-dependent 7-cyano-7-deazaguanine reductase.